Here is a 94-residue protein sequence, read N- to C-terminus: Large ribosomal subunit protein bL27 (94 aa).

Positions 1–10 (MQFLFNIQLF) are excised as a propeptide.

The protein belongs to the bacterial ribosomal protein bL27 family. Post-translationally, the N-terminus is cleaved by ribosomal processing cysteine protease Prp.

The protein is Large ribosomal subunit protein bL27 of Fusobacterium nucleatum subsp. nucleatum (strain ATCC 25586 / DSM 15643 / BCRC 10681 / CIP 101130 / JCM 8532 / KCTC 2640 / LMG 13131 / VPI 4355).